The chain runs to 563 residues: GTPase Obg (563 aa).

The 167-residue stretch at S2 to I168 folds into the Obg domain. Residues A169–H349 form the OBG-type G domain. Residues G175–S182, F200–V204, D221–G224, N301–D304, and S330–A332 each bind GTP. 2 residues coordinate Mg(2+): S182 and T202. The OCT domain maps to D383–P469. Residues R529–E563 are disordered.

The protein belongs to the TRAFAC class OBG-HflX-like GTPase superfamily. OBG GTPase family. As to quaternary structure, monomer. It depends on Mg(2+) as a cofactor.

It localises to the cytoplasm. An essential GTPase which binds GTP, GDP and possibly (p)ppGpp with moderate affinity, with high nucleotide exchange rates and a fairly low GTP hydrolysis rate. Plays a role in control of the cell cycle, stress response, ribosome biogenesis and in those bacteria that undergo differentiation, in morphogenesis control. The protein is GTPase Obg of Bifidobacterium longum (strain DJO10A).